The primary structure comprises 138 residues: MKPAARRRARECAVQALYSWQLSKNDIADVELQFLSEQDVKDVDIAYFRELLSGVAVNAASLDALMAPFLSRQLEELGQVERAVLRIALFELSKRDDVPYKVAINEAIELAKTFGAEDSHKFVNGVLDKVAPTVRKRK.

It belongs to the NusB family.

Involved in transcription antitermination. Required for transcription of ribosomal RNA (rRNA) genes. Binds specifically to the boxA antiterminator sequence of the ribosomal RNA (rrn) operons. This is Transcription antitermination protein NusB from Yersinia pseudotuberculosis serotype O:1b (strain IP 31758).